The chain runs to 509 residues: ATP synthase subunit alpha (509 aa).

ATP is bound at residue 169–176; it reads GDRQTGKT.

It belongs to the ATPase alpha/beta chains family. As to quaternary structure, F-type ATPases have 2 components, CF(1) - the catalytic core - and CF(0) - the membrane proton channel. CF(1) has five subunits: alpha(3), beta(3), gamma(1), delta(1), epsilon(1). CF(0) has three main subunits: a(1), b(2) and c(9-12). The alpha and beta chains form an alternating ring which encloses part of the gamma chain. CF(1) is attached to CF(0) by a central stalk formed by the gamma and epsilon chains, while a peripheral stalk is formed by the delta and b chains.

Its subcellular location is the cell inner membrane. The enzyme catalyses ATP + H2O + 4 H(+)(in) = ADP + phosphate + 5 H(+)(out). In terms of biological role, produces ATP from ADP in the presence of a proton gradient across the membrane. The alpha chain is a regulatory subunit. The chain is ATP synthase subunit alpha from Brucella canis (strain ATCC 23365 / NCTC 10854 / RM-666).